A 326-amino-acid chain; its full sequence is MNVNQGTVGSDPVILATAGYDHTVRFWQAHSGICTRTVQHQDSQVNSLEVTPDRSMIAAAGYQHIRMYDLNSNNPNPVINYDGVSKNITSVGFHEDGRWMYTGGEDCMARIWDLRSRNLQCQRIFQVNAPINCVCLHPNQAELIVGDQSGVIHIWDLKTDHNEQLIPEPDVSVNSVHIDPDASYMAAVNSSGNCYVWNLAGGMGDEVTQLIPKTKIPAHKRYSLRCKFSPDSTLLATCSADQTCKIWRTSNFSLMTELSIKSNNPGETSRGWMWDCAFSGDSQYIVTASSDNLARLWCVETGEIKREYSGHQKAVVCLAFNDSVLG.

WD repeat units follow at residues Met1–Thr37, His40–Asn80, Gly83–Gln122, Gln126–Leu165, Glu168–Val207, Ala218–Glu257, and Thr268–Ser309.

This sequence belongs to the WD repeat LST8 family. In terms of assembly, part of the mechanistic target of rapamycin complex 1 (mTORC1) which contains MTOR, MLST8 and RPTOR. Component of the mechanistic target of rapamycin complex 2 (mTORC2), consisting in two heterotretramers composed of MTOR, MLST8, RICTOR and MAPKAP1/SIN1.

Its subcellular location is the lysosome membrane. It localises to the cytoplasm. In terms of biological role, subunit of both mTORC1 and mTORC2, which regulates cell growth and survival in response to nutrient and hormonal signals. mTORC1 is activated in response to growth factors or amino acids. In response to nutrients, mTORC1 is recruited to the lysosome membrane and promotes protein, lipid and nucleotide synthesis by phosphorylating several substrates, such as ribosomal protein S6 kinase (RPS6KB1 and RPS6KB2) and EIF4EBP1 (4E-BP1). In the same time, it inhibits catabolic pathways by phosphorylating the autophagy initiation components ULK1 and ATG13, as well as transcription factor TFEB, a master regulators of lysosomal biogenesis and autophagy. The mTORC1 complex is inhibited in response to starvation and amino acid depletion. Within mTORC1, MLST8 interacts directly with MTOR and enhances its kinase activity. In nutrient-poor conditions, stabilizes the MTOR-RPTOR interaction and favors RPTOR-mediated inhibition of MTOR activity. As part of the mTORC2 complex, transduces signals from growth factors to pathways involved in proliferation, cytoskeletal organization, lipogenesis and anabolic output. mTORC2 is also activated by growth factors, but seems to be nutrient-insensitive. In response to growth factors, mTORC2 phosphorylates and activates AGC protein kinase family members, including AKT (AKT1, AKT2 and AKT3), PKC (PRKCA, PRKCB and PRKCE) and SGK1. mTORC2 functions upstream of Rho GTPases to regulate the actin cytoskeleton, probably by activating one or more Rho-type guanine nucleotide exchange factors. mTORC2 promotes the serum-induced formation of stress-fibers or F-actin. Within mTORC2, MLST8 acts as a bridge between MAPKAP1/SIN1 and MTOR. The chain is Target of rapamycin complex subunit lst8 (mlst8) from Danio rerio (Zebrafish).